The sequence spans 347 residues: Eukaryotic translation initiation factor 3 subunit H (347 aa).

One can recognise an MPN domain in the interval 1 to 142 (MKIMKHCSQT…LRAFRLSPRF (142 aa)).

The protein belongs to the eIF-3 subunit H family. Component of the eukaryotic translation initiation factor 3 (eIF-3) complex.

The protein resides in the cytoplasm. Functionally, component of the eukaryotic translation initiation factor 3 (eIF-3) complex, which is involved in protein synthesis of a specialized repertoire of mRNAs and, together with other initiation factors, stimulates binding of mRNA and methionyl-tRNAi to the 40S ribosome. The eIF-3 complex specifically targets and initiates translation of a subset of mRNAs involved in cell proliferation. This Neosartorya fischeri (strain ATCC 1020 / DSM 3700 / CBS 544.65 / FGSC A1164 / JCM 1740 / NRRL 181 / WB 181) (Aspergillus fischerianus) protein is Eukaryotic translation initiation factor 3 subunit H.